An 875-amino-acid chain; its full sequence is Alanine--tRNA ligase (875 aa).

Zn(2+) is bound by residues His596, His600, Cys700, and His704.

It belongs to the class-II aminoacyl-tRNA synthetase family. The cofactor is Zn(2+).

It localises to the cytoplasm. The enzyme catalyses tRNA(Ala) + L-alanine + ATP = L-alanyl-tRNA(Ala) + AMP + diphosphate. Catalyzes the attachment of alanine to tRNA(Ala) in a two-step reaction: alanine is first activated by ATP to form Ala-AMP and then transferred to the acceptor end of tRNA(Ala). Also edits incorrectly charged Ser-tRNA(Ala) and Gly-tRNA(Ala) via its editing domain. The polypeptide is Alanine--tRNA ligase (Methanocella arvoryzae (strain DSM 22066 / NBRC 105507 / MRE50)).